A 928-amino-acid chain; its full sequence is Protein Niban 1 (928 aa).

G2 is lipidated: N-myristoyl glycine. Phosphoserine is present on residues S579, S582, S596, S602, and S646. Polar residues predominate over residues 580–596 (VSSLTDLKPPTGSNQAS). The tract at residues 580-600 (VSSLTDLKPPTGSNQASPARR) is disordered. Disordered stretches follow at residues 618 to 654 (VFQESEEEKQPEVPSSLAKGESLSLPGPSPPPDGTEQ) and 669 to 707 (ATEDTAGLPGTCSSELEFGGTLEDEEPAQEEPEPITASG). Residues 690–701 (LEDEEPAQEEPE) are compositionally biased toward acidic residues. S708 carries the post-translational modification Phosphoserine. 2 disordered regions span residues 723–877 (PVDS…ATAS) and 899–928 (PNPDVLLSHKDDVKEGEGGQESFPELPSEE). Residues 801–818 (GGLTEEPLGPMEGELPGE) are compositionally biased toward low complexity. The span at 825–834 (HEGRGGKCTE) shows a compositional bias: basic and acidic residues. Residues 865 to 877 (MGGQSSAAQATAS) are compositionally biased toward low complexity. Basic and acidic residues predominate over residues 905–915 (LSHKDDVKEGE). Position 926 is a phosphoserine (S926).

Belongs to the Niban family. Expressed in various types of thyroid tumor such as papillary thyroid carcinomas and oxyphilic thyroid tumors but not in normal thyroid tissue (at protein level). Strongly expressed in heart, skeletal muscle, pancreas, white blood cells and prostate with moderate expression in colon and spleen. Expressed in renal carcinoma cells but not in normal kidney.

The protein localises to the cytoplasm. It localises to the membrane. Regulates phosphorylation of a number of proteins involved in translation regulation including EIF2A, EIF4EBP1 and RPS6KB1. May be involved in the endoplasmic reticulum stress response. The sequence is that of Protein Niban 1 from Homo sapiens (Human).